Reading from the N-terminus, the 180-residue chain is Ribosome rescue factor SmrB (180 aa).

The Smr domain maps to 98 to 173 (LDLHGLTQLI…GDAALLLLVE (76 aa)).

The protein belongs to the SmrB family. Associates with collided ribosomes, but not with correctly translating polysomes.

Its function is as follows. Acts as a ribosome collision sensor. Detects stalled/collided disomes (pairs of ribosomes where the leading ribosome is stalled and a second ribosome has collided with it) and endonucleolytically cleaves mRNA at the 5' boundary of the stalled ribosome. Stalled/collided disomes form a new interface (primarily via the 30S subunits) that binds SmrB. Cleaved mRNA becomes available for tmRNA ligation, leading to ribosomal subunit dissociation and rescue of stalled ribosomes. This is Ribosome rescue factor SmrB from Proteus mirabilis (strain HI4320).